Reading from the N-terminus, the 360-residue chain is UDP-N-acetylglucosamine--N-acetylmuramyl-(pentapeptide) pyrophosphoryl-undecaprenol N-acetylglucosamine transferase (360 aa).

UDP-N-acetyl-alpha-D-glucosamine-binding positions include 13-15, asparagine 125, arginine 164, serine 191, and glutamine 290; that span reads TGG.

It belongs to the glycosyltransferase 28 family. MurG subfamily.

The protein localises to the cell inner membrane. The enzyme catalyses di-trans,octa-cis-undecaprenyl diphospho-N-acetyl-alpha-D-muramoyl-L-alanyl-D-glutamyl-meso-2,6-diaminopimeloyl-D-alanyl-D-alanine + UDP-N-acetyl-alpha-D-glucosamine = di-trans,octa-cis-undecaprenyl diphospho-[N-acetyl-alpha-D-glucosaminyl-(1-&gt;4)]-N-acetyl-alpha-D-muramoyl-L-alanyl-D-glutamyl-meso-2,6-diaminopimeloyl-D-alanyl-D-alanine + UDP + H(+). It functions in the pathway cell wall biogenesis; peptidoglycan biosynthesis. Functionally, cell wall formation. Catalyzes the transfer of a GlcNAc subunit on undecaprenyl-pyrophosphoryl-MurNAc-pentapeptide (lipid intermediate I) to form undecaprenyl-pyrophosphoryl-MurNAc-(pentapeptide)GlcNAc (lipid intermediate II). In Hahella chejuensis (strain KCTC 2396), this protein is UDP-N-acetylglucosamine--N-acetylmuramyl-(pentapeptide) pyrophosphoryl-undecaprenol N-acetylglucosamine transferase.